Consider the following 380-residue polypeptide: uncharacterized protein (380 aa).

A coiled-coil region spans residues 256 to 301 (DKEEKIQKSYQYQTELITELQGRIAELEKENQSLKENVKEPETSKP).

This is an uncharacterized protein from Pasteurella multocida (strain Pm70).